Here is a 622-residue protein sequence, read N- to C-terminus: 1-deoxy-D-xylulose-5-phosphate synthase (622 aa).

Thiamine diphosphate is bound by residues His80 and 121 to 123 (GHS). Asp152 is a binding site for Mg(2+). Residues 153 to 154 (GA), Asn181, Tyr288, and Glu370 each bind thiamine diphosphate. Asn181 contacts Mg(2+).

Belongs to the transketolase family. DXPS subfamily. Homodimer. It depends on Mg(2+) as a cofactor. The cofactor is thiamine diphosphate.

The catalysed reaction is D-glyceraldehyde 3-phosphate + pyruvate + H(+) = 1-deoxy-D-xylulose 5-phosphate + CO2. It participates in metabolic intermediate biosynthesis; 1-deoxy-D-xylulose 5-phosphate biosynthesis; 1-deoxy-D-xylulose 5-phosphate from D-glyceraldehyde 3-phosphate and pyruvate: step 1/1. Catalyzes the acyloin condensation reaction between C atoms 2 and 3 of pyruvate and glyceraldehyde 3-phosphate to yield 1-deoxy-D-xylulose-5-phosphate (DXP). In Shewanella baltica (strain OS185), this protein is 1-deoxy-D-xylulose-5-phosphate synthase.